We begin with the raw amino-acid sequence, 90 residues long: Small ribosomal subunit protein bS16 (90 aa).

It belongs to the bacterial ribosomal protein bS16 family.

In Lactobacillus acidophilus (strain ATCC 700396 / NCK56 / N2 / NCFM), this protein is Small ribosomal subunit protein bS16.